A 226-amino-acid polypeptide reads, in one-letter code: Lysoplasmalogenase TMEM86B (226 aa).

At Met1–Arg23 the chain is on the cytoplasmic side. Residues Trp24–Ile40 form a helical membrane-spanning segment. Residues Pro41–Ser46 are Extracellular-facing. The chain crosses the membrane as a helical span at residues Trp47 to Met67. Over Ser68–Gln75 the chain is Cytoplasmic. The helical transmembrane segment at Leu76–Trp93 threads the bilayer. Topologically, residues Pro94 to Gly100 are extracellular. A helical membrane pass occupies residues Met101–Phe117. Residues Ser118–Gly123 lie on the Cytoplasmic side of the membrane. Residues Leu124–Leu140 traverse the membrane as a helical segment. Residues Gln141 to Asp146 are Extracellular-facing. Residues Met147–Trp163 form a helical membrane-spanning segment. Topologically, residues Arg164–Ser171 are cytoplasmic. The chain crosses the membrane as a helical span at residues Ala172–Trp188. Residues Asp189 to His199 are Extracellular-facing. The chain crosses the membrane as a helical span at residues Leu200–Leu218. At Arg219–Asp226 the chain is on the cytoplasmic side.

Belongs to the TMEM86 family. In terms of assembly, homodimer.

Its subcellular location is the endoplasmic reticulum membrane. The protein resides in the cytoplasm. The enzyme catalyses a 1-O-(1Z-alkenyl)-sn-glycero-3-phosphocholine + H2O = a 2,3-saturated aldehyde + sn-glycerol 3-phosphocholine. The catalysed reaction is a 1-O-(1Z-alkenyl)-sn-glycero-3-phosphoethanolamine + H2O = a 2,3-saturated aldehyde + sn-glycero-3-phosphoethanolamine. Its activity is regulated as follows. Competitively inhibited by lysophosphatidic acid. Functionally, catalyzes the hydrolysis of the vinyl ether bond of choline or ethanolamine lysoplasmalogens, forming fatty aldehyde and glycerophosphocholine or glycerophosphoethanolamine, respectively and is specific for the sn-2-deacylated (lyso) form of plasmalogen. This Homo sapiens (Human) protein is Lysoplasmalogenase TMEM86B (TMEM86B).